A 410-amino-acid polypeptide reads, in one-letter code: Lissencephaly-1 homolog B (410 aa).

In terms of domain architecture, LisH spans 7–39 (QRDELNRAIADYLRSNGYEEAYSTFKKEAELDV). The stretch at 56 to 82 (TSVIRLQKKVMELESKLNEAKEEITLG) forms a coiled coil. 7 WD repeats span residues 106–147 (GHRS…RTLK), 148–187 (GHTDSVQDISFDQTGKLLASCSADMTIKLWDFQGFECIRT), 190–229 (GHDHNVSSVAIMPNGDHIVSASRDKTMKMWEVATGYCVKT), 232–271 (GHREWVRMVRPNQDGTLLASCSNDQTVRVWVVATKECKAE), 274–333 (EHEH…CLMT), 336–377 (GHDN…KTLS), and 379–410 (HEHFVTSLDFHKASPYVVTGSVDQTVKVWECR).

Belongs to the WD repeat LIS1/nudF family. Can self-associate. Component of the cytosolic PAF-AH (I) heterotetrameric enzyme, which is composed of PAFAH1B1 (beta), PAFAH1B2 (alpha2) and PAFAH1B3 (alpha1) subunits. The catalytic activity of the enzyme resides in the alpha1 (PAFAH1B3) and alpha2 (PAFAH1B2) subunits, whereas the beta subunit (PAFAH1B1) has regulatory activity. Trimer formation is not essential for the catalytic activity. Interacts with dynein, dynactin, nde1 and ndel1. Enriched in the photoreceptor cell layer.

It localises to the cytoplasm. The protein localises to the cytoskeleton. The protein resides in the microtubule organizing center. It is found in the centrosome. Its function is as follows. Regulatory subunit (beta subunit) of the cytosolic type I platelet-activating factor (PAF) acetylhydrolase (PAF-AH (I)), an enzyme that catalyzes the hydrolyze of the acetyl group at the sn-2 position of PAF and its analogs and participates in the PAF inactivation. Regulates the PAF-AH (I) activity in a catalytic dimer composition-dependent manner. Positively regulates the activity of the minus-end directed microtubule motor protein dynein. May enhance dynein-mediated microtubule sliding by targeting dynein to the microtubule plus end. Required for several dynein- and microtubule-dependent processes such as the maintenance of Golgi integrity, the peripheral transport of microtubule fragments and the coupling of the nucleus and centrosome. May be required for proliferation of neuronal precursors and neuronal migration. Involved in the positioning of nuclei in photoreceptor cells. The chain is Lissencephaly-1 homolog B (pafah1b1b) from Danio rerio (Zebrafish).